The primary structure comprises 339 residues: Glycerol-3-phosphate dehydrogenase [NAD(P)+] (339 aa).

NADPH is bound by residues Ser-14, Tyr-15, His-35, and Lys-109. Sn-glycerol 3-phosphate is bound by residues Lys-109, Gly-138, and Thr-140. Ala-142 serves as a coordination point for NADPH. Positions 194, 247, 257, 258, and 259 each coordinate sn-glycerol 3-phosphate. Lys-194 serves as the catalytic Proton acceptor. Arg-258 provides a ligand contact to NADPH. NADPH is bound by residues Val-282 and Glu-284.

The protein belongs to the NAD-dependent glycerol-3-phosphate dehydrogenase family.

Its subcellular location is the cytoplasm. It catalyses the reaction sn-glycerol 3-phosphate + NAD(+) = dihydroxyacetone phosphate + NADH + H(+). It carries out the reaction sn-glycerol 3-phosphate + NADP(+) = dihydroxyacetone phosphate + NADPH + H(+). The protein operates within membrane lipid metabolism; glycerophospholipid metabolism. In terms of biological role, catalyzes the reduction of the glycolytic intermediate dihydroxyacetone phosphate (DHAP) to sn-glycerol 3-phosphate (G3P), the key precursor for phospholipid synthesis. The sequence is that of Glycerol-3-phosphate dehydrogenase [NAD(P)+] from Shewanella pealeana (strain ATCC 700345 / ANG-SQ1).